The chain runs to 392 residues: 8-amino-7-oxononanoate synthase 1 (392 aa).

109–110 is a binding site for pyridoxal 5'-phosphate; the sequence is GF. His-134 contributes to the substrate binding site. Pyridoxal 5'-phosphate-binding positions include Ser-181, 206–209, and 237–240; these read DDAH and TLSK. At Lys-240 the chain carries N6-(pyridoxal phosphate)lysine. Position 354 (Thr-354) interacts with substrate.

Belongs to the class-II pyridoxal-phosphate-dependent aminotransferase family. BioF subfamily. Homodimer. Pyridoxal 5'-phosphate serves as cofactor.

It catalyses the reaction 6-carboxyhexanoyl-[ACP] + L-alanine + H(+) = (8S)-8-amino-7-oxononanoate + holo-[ACP] + CO2. It functions in the pathway cofactor biosynthesis; biotin biosynthesis. Its function is as follows. Catalyzes the decarboxylative condensation of pimeloyl-[acyl-carrier protein] and L-alanine to produce 8-amino-7-oxononanoate (AON), [acyl-carrier protein], and carbon dioxide. This chain is 8-amino-7-oxononanoate synthase 1 (kbl), found in Bacillus subtilis (strain 168).